The chain runs to 307 residues: Transcription factor Sox-3 (307 aa).

The tract at residues 1 to 41 is disordered; sequence MYSMLDTDLKSPVQQSNAPNGGPGTPGGKGNASIPDQERVK. Residues 21-30 show a composition bias toward gly residues; sequence GGPGTPGGKG. Residues 40–108 constitute a DNA-binding region (HMG box); sequence VKRPMNAFMV…VHMKEYPDYK (69 aa). The 9aaTAD motif lies at 259-270; that stretch reads DLRDMISMYLPP.

Interacts with ctnnb1.

It localises to the nucleus. It is found in the cytoplasm. Transcription factor with sequence-specific DNA binding activity. Binds to the consensus sequence 5'-[AT][AT]CAA[AT]G-3', showing a preference for 5'-AACAAT-3' and 5'-AACAAAG-3'. Inhibits beta-catenin-mediated dorsal axis specification by binding to sites within the promoter of the beta-catenin-regulated gene nodal5. Maternally derived sox3 acts as a transcriptional repressor of nodal5 and nodal6 to restrict their expression to the vegetal hemisphere of early embryos and thus establish germ layer formation. Acts at multiple points to inhibit nodal signaling, repressing the expression of the other mesoderm-inducing nodal genes nodal, nodal2 and nodal4, and also acting downstream to induce expression of genes including trim33/ectodermin, ema and coco, whose products repress nodal signaling. The polypeptide is Transcription factor Sox-3 (Xenopus tropicalis (Western clawed frog)).